Reading from the N-terminus, the 197-residue chain is ATP synthase subunit delta (197 aa).

Low complexity predominate over residues 1 to 16; sequence MSSAVSASPQAASPQQ. The disordered stretch occupies residues 1-20; that stretch reads MSSAVSASPQAASPQQDRTS.

The protein belongs to the ATPase delta chain family. In terms of assembly, F-type ATPases have 2 components, F(1) - the catalytic core - and F(0) - the membrane proton channel. F(1) has five subunits: alpha(3), beta(3), gamma(1), delta(1), epsilon(1). F(0) has three main subunits: a(1), b(2) and c(10-14). The alpha and beta chains form an alternating ring which encloses part of the gamma chain. F(1) is attached to F(0) by a central stalk formed by the gamma and epsilon chains, while a peripheral stalk is formed by the delta and b chains.

Its subcellular location is the cell inner membrane. In terms of biological role, f(1)F(0) ATP synthase produces ATP from ADP in the presence of a proton or sodium gradient. F-type ATPases consist of two structural domains, F(1) containing the extramembraneous catalytic core and F(0) containing the membrane proton channel, linked together by a central stalk and a peripheral stalk. During catalysis, ATP synthesis in the catalytic domain of F(1) is coupled via a rotary mechanism of the central stalk subunits to proton translocation. This protein is part of the stalk that links CF(0) to CF(1). It either transmits conformational changes from CF(0) to CF(1) or is implicated in proton conduction. The sequence is that of ATP synthase subunit delta from Acidiphilium cryptum (strain JF-5).